We begin with the raw amino-acid sequence, 747 residues long: RNA polymerase II assembly factor rtp1 (747 aa).

7 HEAT repeats span residues 37–75 (NYFL…LLGV), 103–141 (QIYN…NCHE), 320–358 (DIIR…VCGT), 381–418 (SQLA…NVDS), 459–485 (EENE…LDLE), 486–523 (NPIS…SKDD), and 557–594 (INPV…KYDD).

It belongs to the Tango6 family. Interacts with RNA polymerase II subunits. Interacts with nuclear pore complex subunits.

It is found in the cytoplasm. The protein resides in the nucleus. Its function is as follows. Required for the cytoplasmic assembly and the nuclear import of RNA polymerase II. This chain is RNA polymerase II assembly factor rtp1, found in Schizosaccharomyces pombe (strain 972 / ATCC 24843) (Fission yeast).